Reading from the N-terminus, the 157-residue chain is Transcription elongation factor GreA (157 aa).

The protein belongs to the GreA/GreB family.

Necessary for efficient RNA polymerase transcription elongation past template-encoded arresting sites. The arresting sites in DNA have the property of trapping a certain fraction of elongating RNA polymerases that pass through, resulting in locked ternary complexes. Cleavage of the nascent transcript by cleavage factors such as GreA or GreB allows the resumption of elongation from the new 3'terminus. GreA releases sequences of 2 to 3 nucleotides. The polypeptide is Transcription elongation factor GreA (Bartonella henselae (strain ATCC 49882 / DSM 28221 / CCUG 30454 / Houston 1) (Rochalimaea henselae)).